The chain runs to 590 residues: DELLA protein GAI1 (590 aa).

Over residues 1–10 the composition is skewed to basic residues; it reads MKREYHHPHH. The interval 1–28 is disordered; that stretch reads MKREYHHPHHPTCSTSPTGKGKMWDADP. Positions 35–39 match the DELLA motif motif; that stretch reads DELLA. The interval 153–182 is disordered; sequence HIEQPPQQPPAPPLYQRDNKRLKPTTSATA. The GRAS domain maps to 205 to 575; the sequence is VDSQETGIRL…RPLIATSAWQ (371 aa). A leucine repeat I (LRI) region spans residues 212-266; it reads IRLVHTLMACAEAVQQENLKLAEALVKQIGFLAVSQAGAMRKVATYFAEGLARRI. A VHIID region spans residues 284 to 349; that stretch reads QMHFYETCPY…GGPPSFRLTG (66 aa). A VHIID motif is present at residues 315 to 319; it reads VHVID. A leucine repeat II (LRII) region spans residues 363–395; that stretch reads EVGWKLAQLAETIHVEFEYRGFVANSLADLDAS. The PFYRE stretch occupies residues 405-496; the sequence is VAVNSVFELH…EVYLGQQICN (92 aa). Positions 413–417 match the LXXLL motif motif; the sequence is LHSLL. Residues 499–575 are SAW; it reads ACEGPERVER…RPLIATSAWQ (77 aa).

It belongs to the GRAS family. DELLA subfamily. In terms of processing, phosphorylated. Post-translationally, ubiquitinated. Upon GA application it is ubiquitinated, leading to its subsequent degradation.

It localises to the nucleus. In terms of biological role, probable transcriptional regulator that acts as a repressor of the gibberellin (GA) signaling pathway. Probably acts by participating in large multiprotein complexes that repress transcription of GA-inducible genes. Upon GA application, it is degraded by the proteasome, allowing the GA signaling pathway. In Vitis vinifera (Grape), this protein is DELLA protein GAI1 (GAI1).